The following is a 588-amino-acid chain: Neuropeptide-like 1 (588 aa).

Positions 1–179 (MQCIPKKTFM…DPEVLEYSPD (179 aa)) are excised as a propeptide. Residues 115–143 (NGDLPITIQERESDNDDEEKRSASSSDNV) are disordered. At T194 the chain carries Threonine amide. Serine amide occurs at positions 210, 227, and 244. A Tyrosine amide modification is found at Y260. Residue E281 is modified to Glutamic acid 1-amide. The propeptide occupies 285 to 299 (SIASLARSGDWPSVA). Y318 carries the tyrosine amide modification. Residues 321 to 588 (SLSDDREAPS…SNSHIAPRSM (268 aa)) constitute a propeptide that is removed on maturation. Positions 342 to 382 (GNSEGKENEWQATPFTVSEDLDEGKAKNRSNRRIEASQTRH) are disordered.

It localises to the secreted. The chain is Neuropeptide-like 1 from Camponotus floridanus (Florida carpenter ant).